The chain runs to 276 residues: uncharacterized protein (276 aa).

Positions 20–137 constitute an AB hydrolase-1 domain; it reads PVLIFIPGAN…PPINTFLPDS (118 aa). A disordered region spans residues 57-76; the sequence is GESELTEPLPDSASNPDSDY.

This sequence belongs to the AB hydrolase superfamily.

This is an uncharacterized protein from Staphylococcus aureus (strain N315).